Reading from the N-terminus, the 467-residue chain is Glutamate--tRNA ligase (467 aa).

The 'HIGH' region signature appears at 9 to 19; sequence PSPTGFLHIGG. Residues 241–245 carry the 'KMSKS' region motif; sequence KLSKR. Residue K244 coordinates ATP.

This sequence belongs to the class-I aminoacyl-tRNA synthetase family. Glutamate--tRNA ligase type 1 subfamily. As to quaternary structure, monomer.

It localises to the cytoplasm. It carries out the reaction tRNA(Glu) + L-glutamate + ATP = L-glutamyl-tRNA(Glu) + AMP + diphosphate. Catalyzes the attachment of glutamate to tRNA(Glu) in a two-step reaction: glutamate is first activated by ATP to form Glu-AMP and then transferred to the acceptor end of tRNA(Glu). The polypeptide is Glutamate--tRNA ligase (Methylobacillus flagellatus (strain ATCC 51484 / DSM 6875 / VKM B-1610 / KT)).